Here is a 543-residue protein sequence, read N- to C-terminus: Proline--tRNA ligase, chloroplastic/mitochondrial (543 aa).

The segment at Ala-41–Asp-63 is disordered. A compositionally biased stretch (basic and acidic residues) spans Lys-53 to Asp-63.

The protein belongs to the class-II aminoacyl-tRNA synthetase family.

The protein localises to the plastid. The protein resides in the chloroplast. It is found in the mitochondrion. The enzyme catalyses tRNA(Pro) + L-proline + ATP = L-prolyl-tRNA(Pro) + AMP + diphosphate. Functionally, catalyzes the attachment of proline to tRNA(Pro) in a two-step reaction: proline is first activated by ATP to form Pro-AMP and then transferred to the acceptor end of tRNA(Pro). The protein is Proline--tRNA ligase, chloroplastic/mitochondrial of Arabidopsis thaliana (Mouse-ear cress).